Here is a 349-residue protein sequence, read N- to C-terminus: Phenylalanine--tRNA ligase alpha subunit (349 aa).

Glu-259 is a Mg(2+) binding site.

Belongs to the class-II aminoacyl-tRNA synthetase family. Phe-tRNA synthetase alpha subunit type 1 subfamily. As to quaternary structure, tetramer of two alpha and two beta subunits. Requires Mg(2+) as cofactor.

It localises to the cytoplasm. The catalysed reaction is tRNA(Phe) + L-phenylalanine + ATP = L-phenylalanyl-tRNA(Phe) + AMP + diphosphate + H(+). The polypeptide is Phenylalanine--tRNA ligase alpha subunit (Lactobacillus gasseri (strain ATCC 33323 / DSM 20243 / BCRC 14619 / CIP 102991 / JCM 1131 / KCTC 3163 / NCIMB 11718 / NCTC 13722 / AM63)).